The following is a 330-amino-acid chain: Zinc finger protein sdz-12 (330 aa).

C2H2-type zinc fingers lie at residues 27–48 (PQCQVCKRKFANQKTLRTHMKH), 63–85 (FRCENCEKQFTNKPNLKRHQITH), 91–113 (KKCSTCQRTFFREDQLQRHLHNH), 120–144 (FDCPVLNCSMQFVFYEGVENHLVNH), and 153–176 (APCGKCHKLFGSPRHLLVHYHFDH). A compositionally biased stretch (low complexity) spans 183-195 (SAPAPTSSARLSP). The tract at residues 183 to 203 (SAPAPTSSARLSPITVSTSGS) is disordered. The segment at 271 to 293 (FECKHCTIKFHDATMSIMHNALH) adopts a C2H2-type 6 zinc-finger fold.

Belongs to the krueppel C2H2-type zinc-finger protein family. As to expression, expressed in the somatic gonad.

Functionally, together with ehn-3, may play a role in gonadogenesis. In Caenorhabditis elegans, this protein is Zinc finger protein sdz-12.